Consider the following 188-residue polypeptide: Ribosome-recycling factor (188 aa).

This sequence belongs to the RRF family.

The protein resides in the cytoplasm. Functionally, responsible for the release of ribosomes from messenger RNA at the termination of protein biosynthesis. May increase the efficiency of translation by recycling ribosomes from one round of translation to another. This chain is Ribosome-recycling factor, found in Anaeromyxobacter dehalogenans (strain 2CP-1 / ATCC BAA-258).